The sequence spans 185 residues: Peptidyl-tRNA hydrolase (185 aa).

Residue Tyr14 coordinates tRNA. His19 serves as the catalytic Proton acceptor. Residues Tyr64, Asn66, and Asn112 each contribute to the tRNA site.

It belongs to the PTH family. Monomer.

Its subcellular location is the cytoplasm. The catalysed reaction is an N-acyl-L-alpha-aminoacyl-tRNA + H2O = an N-acyl-L-amino acid + a tRNA + H(+). Its function is as follows. Hydrolyzes ribosome-free peptidyl-tRNAs (with 1 or more amino acids incorporated), which drop off the ribosome during protein synthesis, or as a result of ribosome stalling. Catalyzes the release of premature peptidyl moieties from peptidyl-tRNA molecules trapped in stalled 50S ribosomal subunits, and thus maintains levels of free tRNAs and 50S ribosomes. This Exiguobacterium sibiricum (strain DSM 17290 / CCUG 55495 / CIP 109462 / JCM 13490 / 255-15) protein is Peptidyl-tRNA hydrolase.